A 160-amino-acid polypeptide reads, in one-letter code: Ribosomal RNA large subunit methyltransferase H (160 aa).

Residues L76, G108, and 127–132 (LGKMTW) each bind S-adenosyl-L-methionine.

Belongs to the RNA methyltransferase RlmH family. Homodimer.

The protein localises to the cytoplasm. It carries out the reaction pseudouridine(1915) in 23S rRNA + S-adenosyl-L-methionine = N(3)-methylpseudouridine(1915) in 23S rRNA + S-adenosyl-L-homocysteine + H(+). Its function is as follows. Specifically methylates the pseudouridine at position 1915 (m3Psi1915) in 23S rRNA. This chain is Ribosomal RNA large subunit methyltransferase H, found in Rhizobium meliloti (strain 1021) (Ensifer meliloti).